Consider the following 124-residue polypeptide: PEP-dependent dihydroxyacetone kinase 1, phosphoryl donor subunit DhaM (124 aa).

Residues 4 to 124 (PYGVVIISHS…AANLKTIEIK (121 aa)) enclose the PTS EIIA type-4 domain. His-12 serves as the catalytic Tele-phosphohistidine intermediate.

It belongs to the PEP-utilizing enzyme family. As to quaternary structure, homodimer. The dihydroxyacetone kinase complex is composed of a homodimer of DhaM, a homodimer of DhaK and the subunit DhaL.

It is found in the cytoplasm. It catalyses the reaction dihydroxyacetone + phosphoenolpyruvate = dihydroxyacetone phosphate + pyruvate. In terms of biological role, component of the dihydroxyacetone kinase complex, which is responsible for the phosphoenolpyruvate (PEP)-dependent phosphorylation of dihydroxyacetone. DhaM serves as the phosphoryl donor. Is phosphorylated by phosphoenolpyruvate in an EI- and HPr-dependent reaction, and a phosphorelay system on histidine residues finally leads to phosphoryl transfer to DhaL and dihydroxyacetone. In Listeria innocua serovar 6a (strain ATCC BAA-680 / CLIP 11262), this protein is PEP-dependent dihydroxyacetone kinase 1, phosphoryl donor subunit DhaM.